Reading from the N-terminus, the 290-residue chain is 4-hydroxy-tetrahydrodipicolinate synthase (290 aa).

Thr-44 is a binding site for pyruvate. The active-site Proton donor/acceptor is the Tyr-132. Lys-160 functions as the Schiff-base intermediate with substrate in the catalytic mechanism. Pyruvate is bound at residue Ile-202.

This sequence belongs to the DapA family. In terms of assembly, homotetramer; dimer of dimers.

It is found in the cytoplasm. The enzyme catalyses L-aspartate 4-semialdehyde + pyruvate = (2S,4S)-4-hydroxy-2,3,4,5-tetrahydrodipicolinate + H2O + H(+). It participates in amino-acid biosynthesis; L-lysine biosynthesis via DAP pathway; (S)-tetrahydrodipicolinate from L-aspartate: step 3/4. Functionally, catalyzes the condensation of (S)-aspartate-beta-semialdehyde [(S)-ASA] and pyruvate to 4-hydroxy-tetrahydrodipicolinate (HTPA). The polypeptide is 4-hydroxy-tetrahydrodipicolinate synthase (Legionella pneumophila (strain Corby)).